The following is a 118-amino-acid chain: Large ribosomal subunit protein bL20 (118 aa).

This sequence belongs to the bacterial ribosomal protein bL20 family.

Its function is as follows. Binds directly to 23S ribosomal RNA and is necessary for the in vitro assembly process of the 50S ribosomal subunit. It is not involved in the protein synthesizing functions of that subunit. The polypeptide is Large ribosomal subunit protein bL20 (Cupriavidus metallidurans (strain ATCC 43123 / DSM 2839 / NBRC 102507 / CH34) (Ralstonia metallidurans)).